We begin with the raw amino-acid sequence, 492 residues long: Ketol-acid reductoisomerase (NADP(+)) (492 aa).

Residues 17-208 form the KARI N-terminal Rossmann domain; it reads LGVCEFMDRS…GGDRAGVLKS (192 aa). Residues 45 to 48, Arg68, Arg76, Ser78, and 108 to 110 contribute to the NADP(+) site; these read CGAQ and DKQ. The active site involves His132. Gly158 lines the NADP(+) pocket. 2 consecutive KARI C-terminal knotted domains span residues 209 to 353 and 354 to 487; these read SFVA…AEQE and YYDN…MTEM. The Mg(2+) site is built by Asp217, Glu221, Glu389, and Glu393. Ser414 contributes to the substrate binding site.

It belongs to the ketol-acid reductoisomerase family. Requires Mg(2+) as cofactor.

The enzyme catalyses (2R)-2,3-dihydroxy-3-methylbutanoate + NADP(+) = (2S)-2-acetolactate + NADPH + H(+). It carries out the reaction (2R,3R)-2,3-dihydroxy-3-methylpentanoate + NADP(+) = (S)-2-ethyl-2-hydroxy-3-oxobutanoate + NADPH + H(+). It functions in the pathway amino-acid biosynthesis; L-isoleucine biosynthesis; L-isoleucine from 2-oxobutanoate: step 2/4. The protein operates within amino-acid biosynthesis; L-valine biosynthesis; L-valine from pyruvate: step 2/4. Its function is as follows. Involved in the biosynthesis of branched-chain amino acids (BCAA). Catalyzes an alkyl-migration followed by a ketol-acid reduction of (S)-2-acetolactate (S2AL) to yield (R)-2,3-dihydroxy-isovalerate. In the isomerase reaction, S2AL is rearranged via a Mg-dependent methyl migration to produce 3-hydroxy-3-methyl-2-ketobutyrate (HMKB). In the reductase reaction, this 2-ketoacid undergoes a metal-dependent reduction by NADPH to yield (R)-2,3-dihydroxy-isovalerate. This is Ketol-acid reductoisomerase (NADP(+)) from Cytophaga hutchinsonii (strain ATCC 33406 / DSM 1761 / CIP 103989 / NBRC 15051 / NCIMB 9469 / D465).